A 416-amino-acid polypeptide reads, in one-letter code: Acyl-coenzyme A amino acid N-acyltransferase 1 (416 aa).

At Ser125 the chain carries Phosphoserine. Residues Ser235, Asp325, and His359 each act as charge relay system in the active site. Ser414 carries the phosphoserine modification. Positions 414–416 (SKL) match the Microbody targeting signal motif.

This sequence belongs to the C/M/P thioester hydrolase family. In terms of tissue distribution, expressed mainly in liver and kidney with low levels in adrenal and little or no expression in other tissues.

The protein localises to the peroxisome. The catalysed reaction is tetracosanoyl-CoA + taurine = N-tetracosanoyl-taurine + CoA + H(+). The enzyme catalyses eicosanoyl-CoA + taurine = N-eicosanoyl-taurine + CoA + H(+). It catalyses the reaction taurine + octadecanoyl-CoA = N-octadecanoyl-taurine + CoA + H(+). It carries out the reaction taurine + hexadecanoyl-CoA = N-hexadecanoyl-taurine + CoA + H(+). The catalysed reaction is tetradecanoyl-CoA + taurine = N-tetradecanoyl-taurine + CoA + H(+). The enzyme catalyses dodecanoyl-CoA + taurine = N-dodecanoyl-taurine + CoA + H(+). In terms of biological role, acyltransferase which efficiently conjugates very long-chain and long-chain fatty acids to taurine. Shows no conjugation activity in the presence of glycine. The sequence is that of Acyl-coenzyme A amino acid N-acyltransferase 1 from Mus musculus (Mouse).